The primary structure comprises 87 residues: uncharacterized protein (87 aa).

It to B.subtilis XkdR.

This is an uncharacterized protein from Bacillus subtilis (strain 168).